Reading from the N-terminus, the 1246-residue chain is Stromal processing peptidase, chloroplastic (1246 aa).

The transit peptide at 1–136 (MASFPSPPLA…AKIRRRHVLH (136 aa)) directs the protein to the chloroplast. His228 contacts Zn(2+). The active-site Proton acceptor is the Glu231. His232 contributes to the Zn(2+) binding site. The active site involves Glu302. Glu309 contacts Zn(2+).

The protein belongs to the peptidase M16 family. It depends on Zn(2+) as a cofactor.

The protein resides in the plastid. It is found in the chloroplast stroma. Functionally, cleaves presequences (transit peptides) from chloroplastic protein precursors. Initially recognizes a precursor by binding to the C-terminus of its transit peptide and then removes the transit peptide in a single endoproteolytic step. In a next step, pursues the cleavage of transit peptide to a subfragment form. This is Stromal processing peptidase, chloroplastic from Oryza sativa subsp. japonica (Rice).